The chain runs to 457 residues: Nuclear hormone receptor family member odr-7 (457 aa).

Disordered regions lie at residues Glu-57 to Ala-95 and Lys-230 to Pro-252. The segment at residues Leu-327–His-407 is a DNA-binding region (nuclear receptor). 2 NR C4-type zinc fingers span residues Cys-330–Cys-351 and Cys-367–Cys-395. The disordered stretch occupies residues Gln-435 to Asn-457.

This sequence belongs to the nuclear hormone receptor family. NR0 subfamily. In terms of assembly, heterodimer with a partner that confers DNA binding capacity or a nuclear hormone receptor whose DNA binding it inhibits. As to expression, expressed predominantly in the AWA neurons.

Its subcellular location is the nucleus. The protein resides in the cytoplasm. It localises to the perinuclear region. In terms of biological role, required for the function of one pair of chemosensory neurons called AWA neurons that are involved in chemotaxis to volatile odorants. Acts in a pathway that specifies olfactory neuronal fate. Regulates the transcription of olfactory signaling molecules such as odr-10 that specify AWA neuron identity and function. Represses the expression in AWA neurons of factors such as str-2 which specify AWC neuron identity. This chain is Nuclear hormone receptor family member odr-7 (odr-7), found in Caenorhabditis elegans.